The primary structure comprises 405 residues: Arginine biosynthesis bifunctional protein ArgJ (405 aa).

Residues Thr155, Lys181, Thr192, Glu278, Asn400, and Thr405 each coordinate substrate. Thr192 serves as the catalytic Nucleophile.

This sequence belongs to the ArgJ family. Heterotetramer of two alpha and two beta chains.

It localises to the cytoplasm. The catalysed reaction is N(2)-acetyl-L-ornithine + L-glutamate = N-acetyl-L-glutamate + L-ornithine. It catalyses the reaction L-glutamate + acetyl-CoA = N-acetyl-L-glutamate + CoA + H(+). The protein operates within amino-acid biosynthesis; L-arginine biosynthesis; L-ornithine and N-acetyl-L-glutamate from L-glutamate and N(2)-acetyl-L-ornithine (cyclic): step 1/1. Its pathway is amino-acid biosynthesis; L-arginine biosynthesis; N(2)-acetyl-L-ornithine from L-glutamate: step 1/4. Catalyzes two activities which are involved in the cyclic version of arginine biosynthesis: the synthesis of N-acetylglutamate from glutamate and acetyl-CoA as the acetyl donor, and of ornithine by transacetylation between N(2)-acetylornithine and glutamate. The chain is Arginine biosynthesis bifunctional protein ArgJ from Dehalococcoides mccartyi (strain CBDB1).